A 176-amino-acid polypeptide reads, in one-letter code: Tubulin polymerization-promoting protein family member 3 (176 aa).

At alanine 2 the chain carries N-acetylalanine. A disordered region spans residues 132-152 (TGSHKERFDESGKGKGIAGRQ). Positions 134 to 144 (SHKERFDESGK) are enriched in basic and acidic residues.

The protein belongs to the TPPP family. In terms of tissue distribution, expressed in endometrium during the mid-secretory phase (LH + 7) (at protein level).

It localises to the cytoplasm. The protein localises to the cytoskeleton. Functionally, regulator of microtubule dynamic that has microtubule bundling activity. Required for embryo implantation; possibly by regulating beta-catenin. Also required for decidualization via regulation of beta-catenin. This is Tubulin polymerization-promoting protein family member 3 from Homo sapiens (Human).